A 311-amino-acid polypeptide reads, in one-letter code: Probable manganese-dependent inorganic pyrophosphatase (311 aa).

Residues H9, D13, D15, D77, H99, and D151 each coordinate Mn(2+).

Belongs to the PPase class C family. The cofactor is Mn(2+).

It localises to the cytoplasm. It catalyses the reaction diphosphate + H2O = 2 phosphate + H(+). The chain is Probable manganese-dependent inorganic pyrophosphatase from Streptococcus suis (strain 98HAH33).